A 289-amino-acid chain; its full sequence is Porin (289 aa).

As to quaternary structure, homotrimer.

It is found in the cell outer membrane. In terms of biological role, forms channels that allow the passive diffusion of small hydrophilic solutes up to an exclusion limit of about 0.6 kDa. The chain is Porin (opmA) from Fuscovulum blasticum (Rhodobacter blasticus).